Reading from the N-terminus, the 269-residue chain is Hydroxyethylthiazole kinase (269 aa).

Methionine 45 provides a ligand contact to substrate. The ATP site is built by arginine 121 and threonine 167. Substrate is bound at residue glycine 194.

This sequence belongs to the Thz kinase family. The cofactor is Mg(2+).

The catalysed reaction is 5-(2-hydroxyethyl)-4-methylthiazole + ATP = 4-methyl-5-(2-phosphooxyethyl)-thiazole + ADP + H(+). It participates in cofactor biosynthesis; thiamine diphosphate biosynthesis; 4-methyl-5-(2-phosphoethyl)-thiazole from 5-(2-hydroxyethyl)-4-methylthiazole: step 1/1. Catalyzes the phosphorylation of the hydroxyl group of 4-methyl-5-beta-hydroxyethylthiazole (THZ). The chain is Hydroxyethylthiazole kinase from Bacillus cereus (strain ATCC 14579 / DSM 31 / CCUG 7414 / JCM 2152 / NBRC 15305 / NCIMB 9373 / NCTC 2599 / NRRL B-3711).